We begin with the raw amino-acid sequence, 141 residues long: ATP synthase epsilon chain (141 aa).

It belongs to the ATPase epsilon chain family. As to quaternary structure, F-type ATPases have 2 components, CF(1) - the catalytic core - and CF(0) - the membrane proton channel. CF(1) has five subunits: alpha(3), beta(3), gamma(1), delta(1), epsilon(1). CF(0) has three main subunits: a, b and c.

The protein localises to the cell inner membrane. Its function is as follows. Produces ATP from ADP in the presence of a proton gradient across the membrane. The sequence is that of ATP synthase epsilon chain from Burkholderia thailandensis (strain ATCC 700388 / DSM 13276 / CCUG 48851 / CIP 106301 / E264).